The primary structure comprises 290 residues: MDYKHFKGKHANIVIEIISLLEKGVKKAQEILEKPDAGSYTKLENSSGDTPIKADLALDKFLEENFLSLENIKSVFSEEKETPVTKENGSYLIAYDPLDGSSVMEANFLVGTIIGVYEKDYKAQNLVASLYVVFGHKIELVVALEEVYRYAFYQNKFHFIETIVLENKGKIIASGGNQKDFSLGLKKALEGFFAENYRLRYSGSMVADVHHVLIKKGGMFSYPQKKLRKLFEVFPLALIIEKAKGEAFYFDKGVKKRLLEQSVESYHEKSECYLASPHEAQILEKYLKGE.

Mg(2+) contacts are provided by E78, D96, L98, and D99. Residues 99 to 102 (DGSS), Y201, and K226 each bind substrate. Residue E232 coordinates Mg(2+).

Belongs to the FBPase class 1 family. As to quaternary structure, homotetramer. It depends on Mg(2+) as a cofactor.

The protein localises to the cytoplasm. The catalysed reaction is beta-D-fructose 1,6-bisphosphate + H2O = beta-D-fructose 6-phosphate + phosphate. It functions in the pathway carbohydrate biosynthesis; gluconeogenesis. The chain is Fructose-1,6-bisphosphatase class 1 from Helicobacter pylori (strain G27).